A 504-amino-acid chain; its full sequence is Tyrosine-protein phosphatase non-receptor type substrate 1 (504 aa).

A signal peptide spans 1-30; the sequence is MEPAGPAPGRLGPLLCLLLAASCAWSGVAG. The Extracellular segment spans residues 31–373; it reads EEELQVIQPD…NTGSNERNIY (343 aa). The Ig-like V-type domain maps to 32 to 137; the sequence is EELQVIQPDK…SPDDVEFKSG (106 aa). 2 disulfides stabilise this stretch: Cys55–Cys121 and Cys170–Cys228. Ig-like C1-type domains lie at 148–247 and 254–348; these read PSAP…ANLS and PTLE…HDLK. Residues Asn245, Asn270, Asn292, and Asn319 are each glycosylated (N-linked (GlcNAc...) asparagine). A disulfide bridge connects residues Cys273 and Cys331. The span at 336–355 shows a compositional bias: basic and acidic residues; sequence DGQPAVSKSHDLKVSAHPKE. The interval 336-364 is disordered; sequence DGQPAVSKSHDLKVSAHPKEQGSNTAAEN. The helical transmembrane segment at 374-394 threads the bilayer; the sequence is IVVGVVCTLLVALLMAALYLV. Residues 395-504 lie on the Cytoplasmic side of the membrane; that stretch reads RIRQKKAQGS…EYASVQVPRK (110 aa). A disordered region spans residues 402–504; sequence QGSTSSTRLH…EYASVQVPRK (103 aa). The segment covering 409–421 has biased composition (basic and acidic residues); the sequence is RLHEPEKNAREIT. Tyr429 carries the post-translational modification Phosphotyrosine; by Tyr-kinases. The SH2-binding motif lies at 429–432; that stretch reads YADL. The short motif at 439–444 is the SH3-binding element; it reads KPAPQA. Residues 446–467 are compositionally biased toward polar residues; that stretch reads EPNNHTEYASIQTSPQPASEDT. A phosphotyrosine; by Tyr-kinases mark is found at Tyr453 and Tyr470. 3 short sequence motifs (SH2-binding) span residues 453–456, 470–473, and 496–499; these read YASI, YADL, and YASV. Tyr496 carries the post-translational modification Phosphotyrosine.

In terms of assembly, binds PTPN11 when tyrosine-phosphorylated, except in macrophages, where it primarily binds PTPN6. Binds GRB2 in vitro. Binds FGR. Binds JAK2 irrespective of its phosphorylation status and forms a stable complex. Binds SCAP1 and/or SCAP2. The resulting complex recruits FYB1. Binds PTK2B. Interacts with TRIM2. In terms of processing, N-glycosylated. Phosphorylated on tyrosine residues in response to stimulation with EGF, growth hormone, insulin and PDGF. Dephosphorylated by PTPN11. Ubiquitous. Highly expressed in brain. Detected on myeloid cells, but not T-cells. Detected at lower levels in heart, placenta, lung, testis, ovary, colon, liver, small intestine, prostate, spleen, kidney, skeletal muscle and pancreas.

It is found in the membrane. In terms of biological role, immunoglobulin-like cell surface receptor for CD47. Acts as docking protein and induces translocation of PTPN6, PTPN11 and other binding partners from the cytosol to the plasma membrane. Supports adhesion of cerebellar neurons, neurite outgrowth and glial cell attachment. May play a key role in intracellular signaling during synaptogenesis and in synaptic function. Involved in the negative regulation of receptor tyrosine kinase-coupled cellular responses induced by cell adhesion, growth factors or insulin. Mediates negative regulation of phagocytosis, mast cell activation and dendritic cell activation. CD47 binding prevents maturation of immature dendritic cells and inhibits cytokine production by mature dendritic cells. Plays a role in antiviral immunity and limits new world arenavirus infection by decreasing virus internalization. Receptor for THBS1. Interaction with THBS1 stimulates phosphorylation of SIRPA. In response to THBS1, involved in ROS signaling in non-phagocytic cells, stimulating NADPH oxidase-derived ROS production. The sequence is that of Tyrosine-protein phosphatase non-receptor type substrate 1 (SIRPA) from Homo sapiens (Human).